The chain runs to 353 residues: Phosphate acyltransferase (353 aa).

This sequence belongs to the PlsX family. In terms of assembly, homodimer. Probably interacts with PlsY.

It is found in the cytoplasm. It carries out the reaction a fatty acyl-[ACP] + phosphate = an acyl phosphate + holo-[ACP]. Its pathway is lipid metabolism; phospholipid metabolism. In terms of biological role, catalyzes the reversible formation of acyl-phosphate (acyl-PO(4)) from acyl-[acyl-carrier-protein] (acyl-ACP). This enzyme utilizes acyl-ACP as fatty acyl donor, but not acyl-CoA. This is Phosphate acyltransferase from Bradyrhizobium sp. (strain BTAi1 / ATCC BAA-1182).